Reading from the N-terminus, the 382-residue chain is 2-heptyl-3-hydroxy-4(1H)-quinolone synthase (382 aa).

The protein belongs to the 3-hydroxybenzoate 6-hydroxylase family.

The enzyme catalyses 2-heptyl-4(1H)-quinolone + NADH + O2 + H(+) = 2-heptyl-3-hydroxy-4(1H)-quinolone + NAD(+) + H2O. Functionally, involved in the terminal step of the biosynthesis of quinolone which in addition to serve as a potent signal for quorum sensing, chelates iron and promotes the formation of membrane vesicles (MVs). Catalyzes the hydroxylation of 2-heptyl-4-quinolone (C7-HHQ) to yield 2-heptyl-3-hydroxy-4-quinolone (PQS). This chain is 2-heptyl-3-hydroxy-4(1H)-quinolone synthase (pqsH), found in Pseudomonas aeruginosa (strain ATCC 15692 / DSM 22644 / CIP 104116 / JCM 14847 / LMG 12228 / 1C / PRS 101 / PAO1).